The primary structure comprises 307 residues: tRNA pseudouridine synthase B (307 aa).

Catalysis depends on Asp-38, which acts as the Nucleophile.

Belongs to the pseudouridine synthase TruB family. Type 1 subfamily.

The enzyme catalyses uridine(55) in tRNA = pseudouridine(55) in tRNA. Responsible for synthesis of pseudouridine from uracil-55 in the psi GC loop of transfer RNAs. This Bacillus thuringiensis (strain Al Hakam) protein is tRNA pseudouridine synthase B.